We begin with the raw amino-acid sequence, 238 residues long: Fibroblast growth factor-binding protein 1 (238 aa).

The first 20 residues, 1–20 (MRIHGLILLSFLLLAAQVLS), serve as a signal peptide directing secretion. The interval 25–61 (KTAKNVPDSTTEEDMSPSLGKARNKQRSRTSKSMTHG) is disordered. 3 disulfides stabilise this stretch: Cys-71–Cys-88, Cys-97–Cys-130, and Cys-106–Cys-142. A glycan (O-linked (GalNAc...) serine) is linked at Ser-164. The segment at 197–238 (KDSECLEDPDVLTQRKTALEFCGESWSSFCTFFLNMLQATSC) is sufficient for interaction with FGF2 and FGF2-induced effects. 2 cysteine pairs are disulfide-bonded: Cys-201/Cys-238 and Cys-218/Cys-226.

This sequence belongs to the fibroblast growth factor-binding protein family. Found in a complex with FGFBP1, FGF1 and FGF2. Interacts with FGF1, FGF2, FGF7, FGF10, FGF22 and HSPG2. In terms of tissue distribution, expressed in gut, eye, thymus, skin, lung, tongue, Purkinje cells and cerebral chorioid plexus (at protein level).

Its subcellular location is the secreted. It is found in the extracellular space. The protein resides in the cell membrane. Functionally, acts as a carrier protein that release fibroblast-binding factors (FGFs) from the extracellular matrix (EM) storage and thus enhance the mitogenic activity of FGFs. Enhances FGF2 signaling during tissue repair, angiogenesis and in tumor growth. The polypeptide is Fibroblast growth factor-binding protein 1 (Fgfbp1) (Rattus norvegicus (Rat)).